A 115-amino-acid polypeptide reads, in one-letter code: Non-specific lipid-transfer protein 4.3 (115 aa).

The N-terminal stretch at 1–25 is a signal peptide; that stretch reads MARAAATQLVLVAMVAAMLLVATDA. 4 cysteine pairs are disulfide-bonded: Cys-29/Cys-77, Cys-39/Cys-54, Cys-55/Cys-97, and Cys-75/Cys-111.

Belongs to the plant LTP family.

Its function is as follows. Plant non-specific lipid-transfer proteins transfer phospholipids as well as galactolipids across membranes. May play a role in wax or cutin deposition in the cell walls of expanding epidermal cells and certain secretory tissues. The sequence is that of Non-specific lipid-transfer protein 4.3 (LTP4.3) from Hordeum vulgare (Barley).